Here is a 325-residue protein sequence, read N- to C-terminus: Chain length determinant protein (325 aa).

Residues 1–31 (MRVENNNVSGQNHDPEQIDLIDLLVQLWRGK) are Cytoplasmic-facing. Residues 32-52 (MTIIISVIVAIALAIGYLAVA) form a helical membrane-spanning segment. The Periplasmic portion of the chain corresponds to 53–294 (KEKWTSTAIV…LPIRRDSPKK (242 aa)). Residues 295–315 (AITLILAVLLGGMVGAGIVLG) traverse the membrane as a helical segment. Topologically, residues 316–325 (RNALRNYNAK) are cytoplasmic.

This sequence belongs to the WzzB/Cld/Rol family.

It is found in the cell inner membrane. It participates in bacterial outer membrane biogenesis; lipopolysaccharide biosynthesis. Its function is as follows. Confers a modal distribution of chain length on the O-antigen component of lipopolysaccharide (LPS). Gives rise to a reduced number of short chain molecules and increases in numbers of longer molecules. The polypeptide is Chain length determinant protein (wzzB) (Shigella dysenteriae).